Consider the following 437-residue polypeptide: NADH-ubiquinone oxidoreductase chain 4 (437 aa).

13 helical membrane passes run 8-28 (GASI…AFII), 50-70 (LTPI…LVLI), 78-98 (YKYI…FCVC), 100-120 (FLTF…LILL), 132-152 (FYLM…LLYL), 177-197 (LVGL…HLWL), 212-232 (LAGV…NFII), 239-259 (VISV…IICI), 266-286 (ALVA…ILMM), 297-317 (TMIA…LSYL), 324-344 (LMFM…WFLF), 361-381 (LLII…MCII), and 417-437 (HVLT…LFSV).

The protein belongs to the complex I subunit 4 family.

It is found in the mitochondrion membrane. It catalyses the reaction a ubiquinone + NADH + 5 H(+)(in) = a ubiquinol + NAD(+) + 4 H(+)(out). Core subunit of the mitochondrial membrane respiratory chain NADH dehydrogenase (Complex I) that is believed to belong to the minimal assembly required for catalysis. Complex I functions in the transfer of electrons from NADH to the respiratory chain. The immediate electron acceptor for the enzyme is believed to be ubiquinone. In Albinaria caerulea (Land snail), this protein is NADH-ubiquinone oxidoreductase chain 4 (ND4).